The primary structure comprises 1238 residues: ATP-dependent helicase/nuclease subunit A (1238 aa).

One can recognise a UvrD-like helicase ATP-binding domain in the interval Val12 to Arg490. Ala33 to Thr40 lines the ATP pocket. One can recognise a UvrD-like helicase C-terminal domain in the interval Gly510–Gly818.

Belongs to the helicase family. AddA subfamily. As to quaternary structure, heterodimer of AddA and AddB/RexB. Mg(2+) serves as cofactor.

The catalysed reaction is Couples ATP hydrolysis with the unwinding of duplex DNA by translocating in the 3'-5' direction.. It catalyses the reaction ATP + H2O = ADP + phosphate + H(+). Its function is as follows. The heterodimer acts as both an ATP-dependent DNA helicase and an ATP-dependent, dual-direction single-stranded exonuclease. Recognizes the chi site generating a DNA molecule suitable for the initiation of homologous recombination. The AddA nuclease domain is required for chi fragment generation; this subunit has the helicase and 3' -&gt; 5' nuclease activities. This is ATP-dependent helicase/nuclease subunit A from Lysinibacillus sphaericus (strain C3-41).